The sequence spans 87 residues: Omega-lycotoxin-Am1c (87 aa).

The signal sequence occupies residues M1–C17. Residues Q18 to R40 constitute a propeptide that is removed on maturation. Disulfide bonds link C44/C59, C51/C64, C58/C84, and C66/C82.

Belongs to the neurotoxin omega-lctx family. In terms of tissue distribution, expressed by the venom gland.

The protein resides in the secreted. Functionally, modulates Cav2.1/CACNA1A voltage-gated calcium channels (P/Q-type currents) in rat cerebellar Purkinje cells and hippocampal CA1-CA3 neurons. At saturating concentrations (&gt;10 nM) decelerates activation kinetics and slightly increases peak amplitude without affecting deactivation kinetics. In vivo, does not cause death when intravenously injected into mice. In rat models, through its activity on Cav2.1/CACNA1A, has an ameliorative effect on memory defects provoked by hyperstimulation of N-methyl-D-aspartate receptors (NMDARs) in the hippocampus. This chain is Omega-lycotoxin-Am1c, found in Alopecosa marikovskyi (Wolf spider).